The following is a 364-amino-acid chain: Dual-specificity RNA methyltransferase RlmN (364 aa).

The Proton acceptor role is filled by glutamate 91. The 237-residue stretch at 97-333 (ESDRGTLCIS…VTVRKTRGDD (237 aa)) folds into the Radical SAM core domain. An intrachain disulfide couples cysteine 104 to cysteine 338. Residues cysteine 111, cysteine 115, and cysteine 118 each contribute to the [4Fe-4S] cluster site. S-adenosyl-L-methionine-binding positions include 164 to 165 (GE), serine 196, 218 to 220 (SLH), and asparagine 295. Cysteine 338 serves as the catalytic S-methylcysteine intermediate.

This sequence belongs to the radical SAM superfamily. RlmN family. Requires [4Fe-4S] cluster as cofactor.

The protein resides in the cytoplasm. The enzyme catalyses adenosine(2503) in 23S rRNA + 2 reduced [2Fe-2S]-[ferredoxin] + 2 S-adenosyl-L-methionine = 2-methyladenosine(2503) in 23S rRNA + 5'-deoxyadenosine + L-methionine + 2 oxidized [2Fe-2S]-[ferredoxin] + S-adenosyl-L-homocysteine. It carries out the reaction adenosine(37) in tRNA + 2 reduced [2Fe-2S]-[ferredoxin] + 2 S-adenosyl-L-methionine = 2-methyladenosine(37) in tRNA + 5'-deoxyadenosine + L-methionine + 2 oxidized [2Fe-2S]-[ferredoxin] + S-adenosyl-L-homocysteine. Its function is as follows. Specifically methylates position 2 of adenine 2503 in 23S rRNA and position 2 of adenine 37 in tRNAs. m2A2503 modification seems to play a crucial role in the proofreading step occurring at the peptidyl transferase center and thus would serve to optimize ribosomal fidelity. The polypeptide is Dual-specificity RNA methyltransferase RlmN (Neisseria meningitidis serogroup B (strain ATCC BAA-335 / MC58)).